Reading from the N-terminus, the 343-residue chain is Homeobox protein Hox-D13 (343 aa).

Disordered stretches follow at residues 1 to 28 and 78 to 115; these read MSRAGSWDMDGLRADGGGAGGAPASSSS and GTSERTGSSSSSSSSAVVAARPEAPPAKECPAPTPAAA. Residues 85–115 show a composition bias toward low complexity; it reads SSSSSSSSAVVAARPEAPPAKECPAPTPAAA. The segment at residues 276–335 is a DNA-binding region (homeobox); sequence GRKKRVPYTKLQLKELENEYAINKFINKDKRRRISAATNLSERQVTIWFQNRRVKDKKIV.

It belongs to the Abd-B homeobox family.

The protein localises to the nucleus. Its function is as follows. Sequence-specific transcription factor that binds gene promoters and activates their transcription. Part of a developmental regulatory system that provides cells with specific positional identities on the anterior-posterior axis. The protein is Homeobox protein Hox-D13 (HOXD13) of Homo sapiens (Human).